Reading from the N-terminus, the 558-residue chain is Formate--tetrahydrofolate ligase (558 aa).

Residue 67 to 74 participates in ATP binding; sequence TPAGEGKT.

This sequence belongs to the formate--tetrahydrofolate ligase family.

It catalyses the reaction (6S)-5,6,7,8-tetrahydrofolate + formate + ATP = (6R)-10-formyltetrahydrofolate + ADP + phosphate. It participates in one-carbon metabolism; tetrahydrofolate interconversion. This chain is Formate--tetrahydrofolate ligase, found in Roseobacter denitrificans (strain ATCC 33942 / OCh 114) (Erythrobacter sp. (strain OCh 114)).